The chain runs to 128 residues: Glycine cleavage system H protein (128 aa).

Residues 25-107 form the Lipoyl-binding domain; that stretch reads IITVGITHHA…YGAGWFFKLK (83 aa). An N6-lipoyllysine modification is found at K66.

Belongs to the GcvH family. The glycine cleavage system is composed of four proteins: P, T, L and H. It depends on (R)-lipoate as a cofactor.

Its function is as follows. The glycine cleavage system catalyzes the degradation of glycine. The H protein shuttles the methylamine group of glycine from the P protein to the T protein. The chain is Glycine cleavage system H protein from Neisseria meningitidis serogroup A / serotype 4A (strain DSM 15465 / Z2491).